We begin with the raw amino-acid sequence, 189 residues long: MKKSLFATGLAIAIALPFGANAADYVIDTKGAHASINFKVSHLGYSFIKGRFNTFSGDFSFDEKNIADSKVNVVVDTTSLDSNHAERDKHIRSGDFIDAGKYSEATFNSTKVVDKGNGKLGVTGDLTLHGVTKPITIEAEFVGAGNDPWGGERAGFIGQTRLELADFEIPVMGSSSYVDMELHIEGVKK.

The first 22 residues, Met-1–Ala-22, serve as a signal peptide directing secretion.

This sequence belongs to the UPF0312 family. Type 1 subfamily.

It is found in the periplasm. This Vibrio campbellii (strain ATCC BAA-1116) protein is UPF0312 protein VIBHAR_05924.